The following is a 218-amino-acid chain: MEPGFWHEKWYKQQIGFHQQDINPFLVQYWQRLALPAGAKVFVPLCGKSLDMCFLAEQGHQVIGCELNELAVQQFFSDNQLEMTQTVEGEHQHYQTEQVSLYQGDIFTLPKRITQDVTAFYDRAALIAWPEEMRTQYAKQLANLLPSGSLGLLVTLDYPQETLNGPPFAVSPNWIEAHLTDDFEIQVLACQDVLADNPRFVKKEVPWLNEAAYLLKRK.

4 residues coordinate S-adenosyl-L-methionine: Trp10, Leu45, Glu66, and Arg123.

It belongs to the class I-like SAM-binding methyltransferase superfamily. TPMT family.

It is found in the cytoplasm. It carries out the reaction S-adenosyl-L-methionine + a thiopurine = S-adenosyl-L-homocysteine + a thiopurine S-methylether.. The protein is Thiopurine S-methyltransferase of Shewanella putrefaciens (strain CN-32 / ATCC BAA-453).